The chain runs to 277 residues: MEWWTAFQAFILGVVEGLTEFLPISSTGHQIIVADLIGFGGERAKAFNIIIQLAAILAVVWEFRGKIFQVVRDLPSQHQAQRFTVNLLIAFFPAVILGVLFADLIHEWLFNPITVALALVVGGVIMLWAERRQHVIRAEHVDDMTWKDALKIGCAQCLAMVPGTSRSGATIIGGLLFGLSRKAATEFSFFLAMPTMVGAAVYSGYKYRELFRPEDLPVFAVGFVTSFVFAMVAVRALLKFIGNHSYAAFAWYRIAFGLLILATWQFHLIDWSTAGDL.

6 consecutive transmembrane segments (helical) span residues 47 to 67 (FNII…RGKI), 85 to 105 (VNLL…ADLI), 108 to 128 (WLFN…IMLW), 183 to 203 (AATE…AVYS), 218 to 238 (VFAV…RALL), and 249 to 269 (FAWY…FHLI).

This sequence belongs to the UppP family.

It is found in the cell inner membrane. The catalysed reaction is di-trans,octa-cis-undecaprenyl diphosphate + H2O = di-trans,octa-cis-undecaprenyl phosphate + phosphate + H(+). Functionally, catalyzes the dephosphorylation of undecaprenyl diphosphate (UPP). Confers resistance to bacitracin. The polypeptide is Undecaprenyl-diphosphatase (Pseudomonas paraeruginosa (strain DSM 24068 / PA7) (Pseudomonas aeruginosa (strain PA7))).